The sequence spans 280 residues: 2-dehydro-3-deoxyphosphooctonate aldolase (280 aa).

The protein belongs to the KdsA family.

Its subcellular location is the cytoplasm. The enzyme catalyses D-arabinose 5-phosphate + phosphoenolpyruvate + H2O = 3-deoxy-alpha-D-manno-2-octulosonate-8-phosphate + phosphate. It participates in carbohydrate biosynthesis; 3-deoxy-D-manno-octulosonate biosynthesis; 3-deoxy-D-manno-octulosonate from D-ribulose 5-phosphate: step 2/3. It functions in the pathway bacterial outer membrane biogenesis; lipopolysaccharide biosynthesis. The sequence is that of 2-dehydro-3-deoxyphosphooctonate aldolase from Neisseria meningitidis serogroup B (strain ATCC BAA-335 / MC58).